Consider the following 397-residue polypeptide: Tryptophan synthase beta chain (397 aa).

At Lys-86 the chain carries N6-(pyridoxal phosphate)lysine.

The protein belongs to the TrpB family. Tetramer of two alpha and two beta chains. Pyridoxal 5'-phosphate is required as a cofactor.

The catalysed reaction is (1S,2R)-1-C-(indol-3-yl)glycerol 3-phosphate + L-serine = D-glyceraldehyde 3-phosphate + L-tryptophan + H2O. It functions in the pathway amino-acid biosynthesis; L-tryptophan biosynthesis; L-tryptophan from chorismate: step 5/5. The beta subunit is responsible for the synthesis of L-tryptophan from indole and L-serine. The polypeptide is Tryptophan synthase beta chain (Edwardsiella ictaluri (strain 93-146)).